Consider the following 381-residue polypeptide: MKYASFIAAAAAALASAVSAAGVSGSAEGFAKGVTGGGSATPVYPSTTDELVSYLGDSEARVIILTKTFDFTNTEGTETSSGCAPWGTASGCQLAINKDNWCTNYEPNAPTVSSITYNKAGVLGITVNSNKSIVGQGSAGVIKGRGLRIVSGAKNVIIQNIAITDINPKYVWGGDAITLNEADLVWIDHVTTARIARQHIVLGTQADNRVTISNSLIDGRTDYSATCNGHHYWGVYLDGSNDMVTMMGNYFYYTSGRMPKVQGNTLLHAVNNYFHNIEGHAFEIGSGGYVLAEGNAFQNVDAPVESPISGQLFSAPDATTNEQCKSVFGRACQINAFGSSGSFSQADTAVISKFSGKNIATAHLAQNIPKWVMANAGQGKL.

The signal sequence occupies residues 1–20; sequence MKYASFIAAAAAALASAVSA. Disulfide bonds link C83/C102 and C92/C227. N130 carries N-linked (GlcNAc...) asparagine glycosylation. Residue R257 is part of the active site. Residues C324 and C332 are joined by a disulfide bond.

It belongs to the polysaccharide lyase 1 family.

The protein localises to the secreted. It carries out the reaction Eliminative cleavage of (1-&gt;4)-alpha-D-galacturonan methyl ester to give oligosaccharides with 4-deoxy-6-O-methyl-alpha-D-galact-4-enuronosyl groups at their non-reducing ends.. Functionally, pectinolytic enzymes consist of four classes of enzymes: pectin lyase, polygalacturonase, pectin methylesterase and rhamnogalacturonase. Among pectinolytic enzymes, pectin lyase is the most important in depolymerization of pectin, since it cleaves internal glycosidic bonds of highly methylated pectins. In Aspergillus oryzae (strain ATCC 42149 / RIB 40) (Yellow koji mold), this protein is Pectin lyase 1 (pel1).